Reading from the N-terminus, the 616-residue chain is Dihydroxy-acid dehydratase (616 aa).

Mg(2+) is bound at residue D81. Residue C122 coordinates [2Fe-2S] cluster. Residues D123 and K124 each coordinate Mg(2+). K124 bears the N6-carboxylysine mark. C195 provides a ligand contact to [2Fe-2S] cluster. E491 serves as a coordination point for Mg(2+). Catalysis depends on S517, which acts as the Proton acceptor.

It belongs to the IlvD/Edd family. In terms of assembly, homodimer. The cofactor is [2Fe-2S] cluster. It depends on Mg(2+) as a cofactor.

The catalysed reaction is (2R)-2,3-dihydroxy-3-methylbutanoate = 3-methyl-2-oxobutanoate + H2O. The enzyme catalyses (2R,3R)-2,3-dihydroxy-3-methylpentanoate = (S)-3-methyl-2-oxopentanoate + H2O. The protein operates within amino-acid biosynthesis; L-isoleucine biosynthesis; L-isoleucine from 2-oxobutanoate: step 3/4. It functions in the pathway amino-acid biosynthesis; L-valine biosynthesis; L-valine from pyruvate: step 3/4. Functions in the biosynthesis of branched-chain amino acids. Catalyzes the dehydration of (2R,3R)-2,3-dihydroxy-3-methylpentanoate (2,3-dihydroxy-3-methylvalerate) into 2-oxo-3-methylpentanoate (2-oxo-3-methylvalerate) and of (2R)-2,3-dihydroxy-3-methylbutanoate (2,3-dihydroxyisovalerate) into 2-oxo-3-methylbutanoate (2-oxoisovalerate), the penultimate precursor to L-isoleucine and L-valine, respectively. This Yersinia pseudotuberculosis serotype O:1b (strain IP 31758) protein is Dihydroxy-acid dehydratase.